The following is an 85-amino-acid chain: SCOCO-like protein 1 (85 aa).

A compositionally biased stretch (polar residues) spans 1–20; sequence MSAENISTGSPTGKQPSSEV. Residues 1-34 form a disordered region; that stretch reads MSAENISTGSPTGKQPSSEVNLGEREAGTKNERM. Ser2 carries the N-acetylserine modification. Ser10 bears the Phosphoserine mark. A compositionally biased stretch (basic and acidic residues) spans 22–34; sequence LGEREAGTKNERM.

This sequence belongs to the SLO1 family. Interacts with ARL3.

This chain is SCOCO-like protein 1 (SLO1), found in Saccharomyces cerevisiae (strain ATCC 204508 / S288c) (Baker's yeast).